Reading from the N-terminus, the 224-residue chain is MFPKINTIDPYISLRLFEVKPKYVGYSSVDARNQSFAIHDIKNYEKFSNAGLFYTSPTEITCYCCGMKFCNWLYEKHPLQVHGFWSRNCGFMRATLGIIGLKKMIDSYNDYYNNEVFVKHKNRVYTHKKLEDMGFSKPFMQFILANAFIPPYRKYIHKIILNDRYFTFKFAAHLLSFHKVNLDNQTTYCMTCGIEPIKKDENFCNACKTLNYKHYKTLNFSVKL.

A BIR repeat occupies 29–92 (VDARNQSFAI…GFWSRNCGFM (64 aa)). The Zn(2+) site is built by Cys62, Cys65, His82, and Cys89. A C4-type zinc finger spans residues 189-207 (CMTCGIEPIKKDENFCNAC).

The protein belongs to the asfivirus IAP family. In terms of assembly, interacts with subunit p17 of host CASP3.

The protein resides in the host cytoplasm. It is found in the virion. In terms of biological role, prevent apoptosis of host cell by inhibiting caspase-3/CASP3 activation to promote the viral replication. Also induces the activation of host NF-kappaB. In Ornithodoros (relapsing fever ticks), this protein is Inhibitor of apoptosis protein.